The sequence spans 29 residues: DVDFNSESTRRKNKQKEIVDLHNSLKKTV.

The protein belongs to the CRISP family. Contains 8 disulfide bonds. As to expression, expressed by the venom gland.

It is found in the secreted. The polypeptide is Cysteine-rich venom protein 25-A (Naja haje haje (Egyptian cobra)).